The following is a 270-amino-acid chain: Tryptophan synthase alpha chain (270 aa).

Residues Glu49 and Asp60 each act as proton acceptor in the active site.

The protein belongs to the TrpA family. Tetramer of two alpha and two beta chains.

The enzyme catalyses (1S,2R)-1-C-(indol-3-yl)glycerol 3-phosphate + L-serine = D-glyceraldehyde 3-phosphate + L-tryptophan + H2O. It functions in the pathway amino-acid biosynthesis; L-tryptophan biosynthesis; L-tryptophan from chorismate: step 5/5. Its function is as follows. The alpha subunit is responsible for the aldol cleavage of indoleglycerol phosphate to indole and glyceraldehyde 3-phosphate. In Buchnera aphidicola subsp. Melaphis rhois, this protein is Tryptophan synthase alpha chain.